The chain runs to 140 residues: Large ribosomal subunit protein bL17 (140 aa).

This sequence belongs to the bacterial ribosomal protein bL17 family. As to quaternary structure, part of the 50S ribosomal subunit. Contacts protein L32.

The sequence is that of Large ribosomal subunit protein bL17 from Gluconobacter oxydans (strain 621H) (Gluconobacter suboxydans).